The following is a 458-amino-acid chain: ATP synthase subunit beta (458 aa).

148–155 (GGAGVGKT) contacts ATP.

The protein belongs to the ATPase alpha/beta chains family. F-type ATPases have 2 components, CF(1) - the catalytic core - and CF(0) - the membrane proton channel. CF(1) has five subunits: alpha(3), beta(3), gamma(1), delta(1), epsilon(1). CF(0) has three main subunits: a(1), b(2) and c(9-12). The alpha and beta chains form an alternating ring which encloses part of the gamma chain. CF(1) is attached to CF(0) by a central stalk formed by the gamma and epsilon chains, while a peripheral stalk is formed by the delta and b chains.

It is found in the cell inner membrane. The enzyme catalyses ATP + H2O + 4 H(+)(in) = ADP + phosphate + 5 H(+)(out). Produces ATP from ADP in the presence of a proton gradient across the membrane. The catalytic sites are hosted primarily by the beta subunits. This chain is ATP synthase subunit beta, found in Actinobacillus succinogenes (strain ATCC 55618 / DSM 22257 / CCUG 43843 / 130Z).